The sequence spans 170 residues: MPIKTIKIMVEGGNVKPGPPLAPTLSQLGLNVGEVVKKLNEATSSFKGMSVPVTIEVDSSTKKYEIKVGIPTTTALLLKEAGASEPSGDPAHKKIGNLSLEQVIKIAIMKKPGLTTKSLKAALKSMLGTAKSIGLTVDNRDPKELVKEVEEGKYDDLLAKYENEWNGVKE.

This sequence belongs to the universal ribosomal protein uL11 family. As to quaternary structure, part of the ribosomal stalk of the 50S ribosomal subunit. Interacts with L10 and the large rRNA to form the base of the stalk. L10 forms an elongated spine to which L12 dimers bind in a sequential fashion forming a multimeric L10(L12)X complex.

Forms part of the ribosomal stalk which helps the ribosome interact with GTP-bound translation factors. The sequence is that of Large ribosomal subunit protein uL11 from Saccharolobus solfataricus (strain ATCC 35092 / DSM 1617 / JCM 11322 / P2) (Sulfolobus solfataricus).